The chain runs to 81 residues: Photosystem I iron-sulfur center (81 aa).

4Fe-4S ferredoxin-type domains lie at 2-31 (AHIV…MVPW) and 39-68 (MASA…VRVY). 8 residues coordinate [4Fe-4S] cluster: C11, C14, C17, C21, C48, C51, C54, and C58.

In terms of assembly, the eukaryotic PSI reaction center is composed of at least 11 subunits. It depends on [4Fe-4S] cluster as a cofactor.

The protein localises to the plastid. Its subcellular location is the chloroplast thylakoid membrane. It carries out the reaction reduced [plastocyanin] + hnu + oxidized [2Fe-2S]-[ferredoxin] = oxidized [plastocyanin] + reduced [2Fe-2S]-[ferredoxin]. Apoprotein for the two 4Fe-4S centers FA and FB of photosystem I (PSI); essential for photochemical activity. FB is the terminal electron acceptor of PSI, donating electrons to ferredoxin. The C-terminus interacts with PsaA/B/D and helps assemble the protein into the PSI complex. Required for binding of PsaD and PsaE to PSI. PSI is a plastocyanin/cytochrome c6-ferredoxin oxidoreductase, converting photonic excitation into a charge separation, which transfers an electron from the donor P700 chlorophyll pair to the spectroscopically characterized acceptors A0, A1, FX, FA and FB in turn. This chain is Photosystem I iron-sulfur center, found in Chlamydomonas reinhardtii (Chlamydomonas smithii).